The primary structure comprises 1183 residues: SRC kinase signaling inhibitor 1 (1183 aa).

The segment at 1–44 is disordered; the sequence is MGNAPSQDPERSSPPMLSADDAEYPREYRTLGGGGGGGSGGRRF. Residues S13 and S18 each carry the phosphoserine modification. Residues 31–41 are compositionally biased toward gly residues; sequence LGGGGGGGSGG. A Phosphoserine modification is found at S45. Residue T52 is modified to Phosphothreonine. S53, S64, S143, S165, S169, S179, and S225 each carry phosphoserine. A Phosphotyrosine modification is found at Y241. The tract at residues 284–379 is disordered; it reads ASRESSPTRR…ERRDVKPDED (96 aa). Positions 286–296 are enriched in polar residues; it reads RESSPTRRLNN. The span at 297-306 shows a compositional bias: low complexity; that stretch reads LSPAPHLASG. A phosphoserine mark is found at S298, S307, and S324. Over residues 313-331 the composition is skewed to low complexity; sequence PSGLPSGLQSGSPSRSRLS. An omega-N-methylarginine mark is found at R329 and R336. 3 positions are modified to phosphoserine: S343, S362, and S364. Positions 369 to 379 are enriched in basic and acidic residues; the sequence is LERRDVKPDED. Y396 is subject to Phosphotyrosine. The segment at 466–643 is disordered; that stretch reads YGFRLPPSSP…ASSTPAGQPT (178 aa). The segment covering 485–497 has biased composition (pro residues); it reads PGGPPPPHSPYSG. Residues S493, S496, and S500 each carry the phosphoserine modification. R501 is modified (omega-N-methylarginine). 5 positions are modified to phosphoserine: S503, S513, S515, S517, and S522. Positions 524–541 are enriched in low complexity; the sequence is GGKTRSAGSASTAGAPPS. The segment covering 562-574 has biased composition (basic and acidic residues); that stretch reads KDTETRERMEAME. Residues S598 and S621 each carry the phosphoserine modification. Phosphothreonine is present on residues T624 and T637. Residues 634–643 show a composition bias toward low complexity; that stretch reads ASSTPAGQPT. An interaction with SNAP25 region spans residues 647–697; sequence RLQMQLHLRGLQNSASDLRGQLQQLRKLQLQNQESVRALLKRTEAELSMRV. Coiled-coil stretches lie at residues 654 to 674 and 726 to 746; these read LRGL…LRKL and EELI…IQRD. Residues S844, S857, and S866 each carry the phosphoserine modification. Disordered stretches follow at residues 861–907 and 949–1032; these read EMPP…KAVS and DCAS…VTSK. A Phosphothreonine modification is found at T884. S987 carries the post-translational modification Phosphoserine. Residues 1002-1011 show a composition bias toward pro residues; the sequence is KSPPPPPPRR. Phosphoserine is present on residues S1043 and S1060. 2 disordered regions span residues 1058 to 1081 and 1105 to 1183; these read AVSE…DEDD and GASR…SISF. The segment covering 1135 to 1183 has biased composition (polar residues); that stretch reads QAQQQATKPSKEMSGSNETSSPVSEKPSASRTSIPVLTSFGARNSSISF.

It belongs to the SRCIN1 family. Interacts with the N-terminal coiled-coil region of SNAP25. Interacts with BCAR1/p130Cas and SRC through its C-terminal domain. Interacts with CSK, CTTN, SORBS3/vinexin, SYP and MAPRE3/EB3. Tyrosine-phosphorylated in response to EGF and to cell adhesion to integrin ligands. Expressed in some primary breast carcinomas where its presence is significantly associated with increased tumor size. Not detected in normal breast tissue.

The protein resides in the cytoplasm. The protein localises to the cytoskeleton. Its subcellular location is the cell projection. It localises to the axon. It is found in the dendrite. The protein resides in the presynapse. The protein localises to the postsynapse. Its subcellular location is the postsynaptic density. Functionally, acts as a negative regulator of SRC by activating CSK which inhibits SRC activity and downstream signaling, leading to impaired cell spreading and migration. Regulates dendritic spine morphology. Involved in calcium-dependent exocytosis. May play a role in neurotransmitter release or synapse maintenance. This is SRC kinase signaling inhibitor 1 from Homo sapiens (Human).